The chain runs to 192 residues: Shikimate kinase (192 aa).

27–32 (GTGKTT) provides a ligand contact to ATP. Threonine 31 contributes to the Mg(2+) binding site. Substrate contacts are provided by aspartate 49, arginine 73, and glycine 95. Arginine 133 contributes to the ATP binding site. Arginine 152 provides a ligand contact to substrate.

Belongs to the shikimate kinase family. In terms of assembly, monomer. It depends on Mg(2+) as a cofactor.

It is found in the cytoplasm. It carries out the reaction shikimate + ATP = 3-phosphoshikimate + ADP + H(+). It participates in metabolic intermediate biosynthesis; chorismate biosynthesis; chorismate from D-erythrose 4-phosphate and phosphoenolpyruvate: step 5/7. Its function is as follows. Catalyzes the specific phosphorylation of the 3-hydroxyl group of shikimic acid using ATP as a cosubstrate. This Hahella chejuensis (strain KCTC 2396) protein is Shikimate kinase.